We begin with the raw amino-acid sequence, 886 residues long: Alanine--tRNA ligase (886 aa).

Zn(2+)-binding residues include His564, His568, Cys666, and His670.

This sequence belongs to the class-II aminoacyl-tRNA synthetase family. It depends on Zn(2+) as a cofactor.

It localises to the cytoplasm. It carries out the reaction tRNA(Ala) + L-alanine + ATP = L-alanyl-tRNA(Ala) + AMP + diphosphate. Its function is as follows. Catalyzes the attachment of alanine to tRNA(Ala) in a two-step reaction: alanine is first activated by ATP to form Ala-AMP and then transferred to the acceptor end of tRNA(Ala). Also edits incorrectly charged Ser-tRNA(Ala) and Gly-tRNA(Ala) via its editing domain. The chain is Alanine--tRNA ligase from Prochlorococcus marinus (strain MIT 9515).